Consider the following 512-residue polypeptide: Glucose-6-phosphate 1-dehydrogenase (512 aa).

Residues R61, 103–104 (EF), and K171 each bind NADP(+). 4 residues coordinate substrate: H201, K205, E239, and D258. The active-site Proton acceptor is the H263. The substrate site is built by K360 and K365. The segment at 479–512 (QDSSPSFPNYPAGSSGPKEADALIERDGRSWRPL) is disordered. Basic and acidic residues predominate over residues 496-512 (KEADALIERDGRSWRPL).

Belongs to the glucose-6-phosphate dehydrogenase family.

The enzyme catalyses D-glucose 6-phosphate + NADP(+) = 6-phospho-D-glucono-1,5-lactone + NADPH + H(+). The protein operates within carbohydrate degradation; pentose phosphate pathway; D-ribulose 5-phosphate from D-glucose 6-phosphate (oxidative stage): step 1/3. Its function is as follows. Catalyzes the oxidation of glucose 6-phosphate to 6-phosphogluconolactone. The protein is Glucose-6-phosphate 1-dehydrogenase of Chlamydia pneumoniae (Chlamydophila pneumoniae).